Reading from the N-terminus, the 156-residue chain is Small ribosomal subunit protein uS7 (156 aa).

This sequence belongs to the universal ribosomal protein uS7 family. As to quaternary structure, part of the 30S ribosomal subunit. Contacts proteins S9 and S11.

Functionally, one of the primary rRNA binding proteins, it binds directly to 16S rRNA where it nucleates assembly of the head domain of the 30S subunit. Is located at the subunit interface close to the decoding center, probably blocks exit of the E-site tRNA. The sequence is that of Small ribosomal subunit protein uS7 from Paracoccus denitrificans (strain Pd 1222).